The chain runs to 444 residues: Methylenetetrahydrofolate--tRNA-(uracil-5-)-methyltransferase TrmFO (444 aa).

10–15 (GAGLAG) provides a ligand contact to FAD.

Belongs to the MnmG family. TrmFO subfamily. It depends on FAD as a cofactor.

The protein localises to the cytoplasm. The catalysed reaction is uridine(54) in tRNA + (6R)-5,10-methylene-5,6,7,8-tetrahydrofolate + NADH + H(+) = 5-methyluridine(54) in tRNA + (6S)-5,6,7,8-tetrahydrofolate + NAD(+). The enzyme catalyses uridine(54) in tRNA + (6R)-5,10-methylene-5,6,7,8-tetrahydrofolate + NADPH + H(+) = 5-methyluridine(54) in tRNA + (6S)-5,6,7,8-tetrahydrofolate + NADP(+). Functionally, catalyzes the folate-dependent formation of 5-methyl-uridine at position 54 (M-5-U54) in all tRNAs. The polypeptide is Methylenetetrahydrofolate--tRNA-(uracil-5-)-methyltransferase TrmFO (Streptococcus sanguinis (strain SK36)).